The primary structure comprises 268 residues: Mitochondrial distribution and morphology protein 12 (268 aa).

One can recognise an SMP-LTD domain in the interval 1–266; it reads MSIDLEWCKL…FPNFHTIVMA (266 aa). Positions 66–136 are disordered; that stretch reads EDDEEGSDRG…PPPAENPHPN (71 aa). Positions 102–111 are enriched in polar residues; the sequence is PATNVTSSLD. Basic and acidic residues predominate over residues 112-121; the sequence is TRSDQPDDQK.

Belongs to the MDM12 family. Component of the ER-mitochondria encounter structure (ERMES) or MDM complex, composed of MMM1, MDM10, MDM12 and MDM34. An MMM1 homodimer associates with one molecule of MDM12 on each side in a pairwise head-to-tail manner, and the SMP-LTD domains of MMM1 and MDM12 generate a continuous hydrophobic tunnel for phospholipid trafficking.

The protein resides in the mitochondrion outer membrane. It is found in the endoplasmic reticulum membrane. In terms of biological role, component of the ERMES/MDM complex, which serves as a molecular tether to connect the endoplasmic reticulum (ER) and mitochondria. Components of this complex are involved in the control of mitochondrial shape and protein biogenesis, and function in nonvesicular lipid trafficking between the ER and mitochondria. MDM12 is required for the interaction of the ER-resident membrane protein MMM1 and the outer mitochondrial membrane-resident beta-barrel protein MDM10. The MDM12-MMM1 subcomplex functions in the major beta-barrel assembly pathway that is responsible for biogenesis of all mitochondrial outer membrane beta-barrel proteins, and acts in a late step after the SAM complex. The MDM10-MDM12-MMM1 subcomplex further acts in the TOM40-specific pathway after the action of the MDM12-MMM1 complex. Essential for establishing and maintaining the structure of mitochondria and maintenance of mtDNA nucleoids. The chain is Mitochondrial distribution and morphology protein 12 from Laccaria bicolor (strain S238N-H82 / ATCC MYA-4686) (Bicoloured deceiver).